The sequence spans 224 residues: Lipoprotein-releasing system ATP-binding protein LolD (224 aa).

Residues 4 to 224 enclose the ABC transporter domain; sequence LSIRNVFKSY…RLAGGEVSEA (221 aa). Position 40 to 47 (40 to 47) interacts with ATP; that stretch reads GASGAGKS.

The protein belongs to the ABC transporter superfamily. Lipoprotein translocase (TC 3.A.1.125) family. The complex is composed of two ATP-binding proteins (LolD) and two transmembrane proteins (LolC and LolE).

It localises to the cell inner membrane. Part of the ABC transporter complex LolCDE involved in the translocation of mature outer membrane-directed lipoproteins, from the inner membrane to the periplasmic chaperone, LolA. Responsible for the formation of the LolA-lipoprotein complex in an ATP-dependent manner. The sequence is that of Lipoprotein-releasing system ATP-binding protein LolD from Myxococcus xanthus (strain DK1622).